The following is a 371-amino-acid chain: Putative glutamate--cysteine ligase 2 (371 aa).

This sequence belongs to the glutamate--cysteine ligase type 2 family. YbdK subfamily. As to quaternary structure, homodimer.

It carries out the reaction L-cysteine + L-glutamate + ATP = gamma-L-glutamyl-L-cysteine + ADP + phosphate + H(+). In terms of biological role, ATP-dependent carboxylate-amine ligase which exhibits weak glutamate--cysteine ligase activity. The sequence is that of Putative glutamate--cysteine ligase 2 from Cronobacter sakazakii (strain ATCC BAA-894) (Enterobacter sakazakii).